We begin with the raw amino-acid sequence, 374 residues long: Protein RecA (374 aa).

Residue 66-73 coordinates ATP; it reads GPESSGKT. The segment at 326–374 is disordered; it reads KLGVGVHPEESATEPGADAASAAPADAAPAVPAPTTAKATKSKATAAKS. Residues 338–374 are compositionally biased toward low complexity; sequence TEPGADAASAAPADAAPAVPAPTTAKATKSKATAAKS.

This sequence belongs to the RecA family.

It localises to the cytoplasm. Its function is as follows. Can catalyze the hydrolysis of ATP in the presence of single-stranded DNA, the ATP-dependent uptake of single-stranded DNA by duplex DNA, and the ATP-dependent hybridization of homologous single-stranded DNAs. It interacts with LexA causing its activation and leading to its autocatalytic cleavage. This chain is Protein RecA, found in Streptomyces coelicolor (strain ATCC BAA-471 / A3(2) / M145).